The following is a 1140-amino-acid chain: uncharacterized protein (1140 aa).

Transmembrane regions (helical) follow at residues 8–28 (FLLF…SAFT) and 1098–1118 (IAIT…SGVV).

The protein to M.pneumoniae MPN_375 (in the N-terminal section), M.pneumoniae MPN_374 (in the central section) and M.pneumoniae MPN_373 (in the C-terminal section).

Its subcellular location is the cell membrane. This is an uncharacterized protein from Mycoplasma pneumoniae (strain ATCC 29342 / M129 / Subtype 1) (Mycoplasmoides pneumoniae).